A 103-amino-acid polypeptide reads, in one-letter code: Carboxysome shell protein CcmK3 (103 aa).

The BMC domain maps to 4–91; sequence AVGVIQTLGF…PPENVLAVLP (88 aa).

It belongs to the bacterial microcompartments protein family. CcmK subfamily. As to quaternary structure, forms mixed heterohexamers with CcmK4, probably with 1:5 CcmK3:CcmK4 stoichiometry. Only very weak interactions with CcmK1 and CcmK2 were seen. Bulky residues in the pore region probably preclude the formation of homohexamers by this subunit.

It localises to the carboxysome. Its function is as follows. A probably minor shell protein component of the carboxysome, a polyhedral inclusion where RuBisCO (ribulose bisphosphate carboxylase, rbcL-rbcS) is sequestered. This subunit probably does not form homohexamers. This is Carboxysome shell protein CcmK3 from Synechocystis sp. (strain ATCC 27184 / PCC 6803 / Kazusa).